Consider the following 938-residue polypeptide: Isoleucine--tRNA ligase (938 aa).

The short motif at 58–68 (PYANGNIHIGH) is the 'HIGH' region element. Residue glutamate 562 participates in L-isoleucyl-5'-AMP binding. A 'KMSKS' region motif is present at residues 603–607 (KMSKS). Residue lysine 606 participates in ATP binding. Positions 901, 904, 921, and 924 each coordinate Zn(2+).

The protein belongs to the class-I aminoacyl-tRNA synthetase family. IleS type 1 subfamily. Monomer. The cofactor is Zn(2+).

It localises to the cytoplasm. The catalysed reaction is tRNA(Ile) + L-isoleucine + ATP = L-isoleucyl-tRNA(Ile) + AMP + diphosphate. Catalyzes the attachment of isoleucine to tRNA(Ile). As IleRS can inadvertently accommodate and process structurally similar amino acids such as valine, to avoid such errors it has two additional distinct tRNA(Ile)-dependent editing activities. One activity is designated as 'pretransfer' editing and involves the hydrolysis of activated Val-AMP. The other activity is designated 'posttransfer' editing and involves deacylation of mischarged Val-tRNA(Ile). This Actinobacillus pleuropneumoniae serotype 7 (strain AP76) protein is Isoleucine--tRNA ligase.